The chain runs to 618 residues: MCGIVGYAGRNAAAPVIIESLKKLEYRGYDSAGVTVLGSGVETYKAVGKIINLESEIPKNLKGAIGIGHTRWATHGRPSTENAHPHNSGGNPVKISLVHNGIIENYMALKERLIGEGYEFKSETDTEVIAHLLHKHIYGSPDGKEARNNLLAGLREALKEIEGSYALAVISADEQGKLVLARKDSPLVIGLGKGENFAASDVTAFLIHTRDVIFVDDFETAVLTPDSVEIFDREGKLKEKKIEKIEWDFEAAEKAGYEHFMLKEIHEQVSAIHNTLAGKVSELEGAIYLKELNLNDDEIKKLSRVQILACGTSWHAGLLGKYLFEQLAGIHCDIDICSEYRYRNPVMHEGTLAIAITQSGETADTLAAVREIMSYNCPTLAITNVVGSTITREANSVLYTRAGPEIGVAATKTFSTQLILLYLLAVKFALVRGKLSPDYVKSFITEIRKVPGEIQQILNQKEVIRECAENFACSKSYFFLGRHLSYPIALEGALKLKEISYVHAEGFAAGELKHGPIALLDEGAPVVAIATKGQTYEKMLSNIKEVKARDAYVIAVANINDTEIGKYADVVLRVPSCDELLAPLLSVVVLQLLAYYTALARDCAIDKPRNLAKSVTVE.

Cys2 serves as the catalytic Nucleophile; for GATase activity. Positions 2 to 226 (CGIVGYAGRN…DFETAVLTPD (225 aa)) constitute a Glutamine amidotransferase type-2 domain. A disordered region spans residues 72–91 (WATHGRPSTENAHPHNSGGN). SIS domains follow at residues 295 to 434 (NDDE…VRGK) and 467 to 608 (CAEN…IDKP). The active-site For Fru-6P isomerization activity is the Lys613.

Homodimer.

It is found in the cytoplasm. The enzyme catalyses D-fructose 6-phosphate + L-glutamine = D-glucosamine 6-phosphate + L-glutamate. In terms of biological role, catalyzes the first step in hexosamine metabolism, converting fructose-6P into glucosamine-6P using glutamine as a nitrogen source. In Methanosarcina mazei (strain ATCC BAA-159 / DSM 3647 / Goe1 / Go1 / JCM 11833 / OCM 88) (Methanosarcina frisia), this protein is Glutamine--fructose-6-phosphate aminotransferase [isomerizing].